The following is a 185-amino-acid chain: Large ribosomal subunit protein bL25 (185 aa).

This sequence belongs to the bacterial ribosomal protein bL25 family. CTC subfamily. In terms of assembly, part of the 50S ribosomal subunit; part of the 5S rRNA/L5/L18/L25 subcomplex. Contacts the 5S rRNA. Binds to the 5S rRNA independently of L5 and L18.

In terms of biological role, this is one of the proteins that binds to the 5S RNA in the ribosome where it forms part of the central protuberance. This is Large ribosomal subunit protein bL25 from Chlamydia muridarum (strain MoPn / Nigg).